The following is a 526-amino-acid chain: Peptide chain release factor 3 (526 aa).

One can recognise a tr-type G domain in the interval 9-277; it reads DRRRTFAIVS…TFVDHAPAPL (269 aa). Residues 18–25, 86–90, and 140–143 each bind GTP; these read SHPDAGKT, DTPGH, and NKLD.

Belongs to the TRAFAC class translation factor GTPase superfamily. Classic translation factor GTPase family. PrfC subfamily.

It is found in the cytoplasm. Functionally, increases the formation of ribosomal termination complexes and stimulates activities of RF-1 and RF-2. It binds guanine nucleotides and has strong preference for UGA stop codons. It may interact directly with the ribosome. The stimulation of RF-1 and RF-2 is significantly reduced by GTP and GDP, but not by GMP. The polypeptide is Peptide chain release factor 3 (Geobacter sulfurreducens (strain ATCC 51573 / DSM 12127 / PCA)).